A 484-amino-acid polypeptide reads, in one-letter code: Vanillin dehydrogenase (484 aa).

NADP(+)-binding positions include Trp-156–Asn-157, Lys-180–Ser-183, and Gly-234–Ser-235. NAD(+)-binding positions include Lys-180 and Gly-234–Gly-239. The active-site Proton acceptor is Glu-258. Residue Leu-259 participates in NADP(+) binding. Cys-292 acts as the Nucleophile in catalysis. Gln-339 and Glu-386 together coordinate NAD(+). Glu-386 is a binding site for NADP(+).

The protein belongs to the aldehyde dehydrogenase family. As to quaternary structure, exists as a homodimer, homotrimer and homotetramer.

The enzyme catalyses vanillin + NAD(+) + H2O = vanillate + NADH + 2 H(+). It carries out the reaction vanillin + NADP(+) + H2O = vanillate + NADPH + 2 H(+). It catalyses the reaction 3,4-dihydroxybenzaldehyde + NAD(+) + H2O = 3,4-dihydroxybenzoate + NADH + 2 H(+). The catalysed reaction is 3,4-dihydroxybenzaldehyde + NADP(+) + H2O = 3,4-dihydroxybenzoate + NADPH + 2 H(+). The enzyme catalyses 4-hydroxybenzaldehyde + NAD(+) + H2O = 4-hydroxybenzoate + NADH + 2 H(+). It carries out the reaction 4-hydroxybenzaldehyde + NADP(+) + H2O = 4-hydroxybenzoate + NADPH + 2 H(+). Catalyzes oxidation of vanillin to vanillate. Also oxidizes 3,4-dihydroxybenzaldehyde and 4-hydroxybenzaldehyde significantly. Other aromatic aldehyde substrates in the order of decreasing activity include 3-hydroxybenzaldehyde, 4-nitrobenzaldehyde, terephthalaldehyde, 2,4-dichlorobenzaldehyde, benzaldehyde and 3-phenylpropanal. Low activity with phthalaldehyde, cinnamaldehyde and syringaldehyde. No activity with phenylacetaldehyde, formaldehyde or aldehyde. Active with both NAD(+) and NADP(+). Involved in the degradation pathway of lignin-derived aromatic compounds of plant cell walls. Catalyzes the conversion of vanillin to vanillate due to toxicity of vanillin to the cells. The polypeptide is Vanillin dehydrogenase (Corynebacterium glutamicum (strain ATCC 13032 / DSM 20300 / JCM 1318 / BCRC 11384 / CCUG 27702 / LMG 3730 / NBRC 12168 / NCIMB 10025 / NRRL B-2784 / 534)).